The chain runs to 402 residues: Serine/threonine-protein phosphatase 4 regulatory subunit 2 (402 aa).

Over residues 206 to 248 (MDEEFEDEDYEDHEDEEEDEEDEDNDSDVDEMEAEEVEEDASD) the composition is skewed to acidic residues. 3 disordered regions span residues 206 to 270 (MDEE…DVTD), 291 to 311 (SVLSVSSHAANEDENESILSR), and 331 to 402 (GFIT…KKRM). Over residues 348 to 358 (SSSSMVSPVVS) the composition is skewed to low complexity. Residues 371–396 (INTFISPDTTNSVTQAEKNELSTSPL) are compositionally biased toward polar residues.

The protein belongs to the PPP4R2 family. As to quaternary structure, regulatory subunit (R2) of the histone H2A phosphatase complex (HTP-C) consisting of PPH3, PSY2 and PSY4.

It is found in the nucleus. In terms of biological role, regulatory subunit of the histone H2A phosphatase complex, which dephosphorylates H2AS128ph (gamma-H2A) that has been displaced from sites of DNA lesions in the double-stranded DNA break repair process. Dephosphorylation is necessary for efficient recovery from the DNA damage checkpoint. The sequence is that of Serine/threonine-protein phosphatase 4 regulatory subunit 2 (PSY4) from Kluyveromyces lactis (strain ATCC 8585 / CBS 2359 / DSM 70799 / NBRC 1267 / NRRL Y-1140 / WM37) (Yeast).